The sequence spans 327 residues: Putative thiamine biosynthesis oxidoreductase ThiO (327 aa).

The protein operates within cofactor biosynthesis; thiamine diphosphate biosynthesis. May have amino acid oxidase activity in the biosynthesis of thiazole when cysteine gives its thiol group to be inserted into the thiazole molecule and the rest of the molecule is deaminated to give pyruvic acid and ammonia. The protein is Putative thiamine biosynthesis oxidoreductase ThiO (thiO) of Rhizobium etli (strain ATCC 51251 / DSM 11541 / JCM 21823 / NBRC 15573 / CFN 42).